The primary structure comprises 317 residues: Beta-ketoacyl-[acyl-carrier-protein] synthase III (317 aa).

Catalysis depends on residues C112 and H244. Residues 245 to 249 (QANIR) are ACP-binding. Residue N274 is part of the active site.

The protein belongs to the thiolase-like superfamily. FabH family. As to quaternary structure, homodimer.

Its subcellular location is the cytoplasm. It carries out the reaction malonyl-[ACP] + acetyl-CoA + H(+) = 3-oxobutanoyl-[ACP] + CO2 + CoA. It participates in lipid metabolism; fatty acid biosynthesis. Its function is as follows. Catalyzes the condensation reaction of fatty acid synthesis by the addition to an acyl acceptor of two carbons from malonyl-ACP. Catalyzes the first condensation reaction which initiates fatty acid synthesis and may therefore play a role in governing the total rate of fatty acid production. Possesses both acetoacetyl-ACP synthase and acetyl transacylase activities. Its substrate specificity determines the biosynthesis of branched-chain and/or straight-chain of fatty acids. This chain is Beta-ketoacyl-[acyl-carrier-protein] synthase III, found in Rickettsia massiliae (strain Mtu5).